Reading from the N-terminus, the 205-residue chain is Recombination protein RecR (205 aa).

The segment at 59–74 (CARCNTFCEGGLCDIC) adopts a C4-type zinc-finger fold. The Toprim domain occupies 82-177 (RRLMVVHMPA…KVSRLSQGIP (96 aa)).

Belongs to the RecR family.

Functionally, may play a role in DNA repair. It seems to be involved in an RecBC-independent recombinational process of DNA repair. It may act with RecF and RecO. The polypeptide is Recombination protein RecR (Neisseria meningitidis serogroup A / serotype 4A (strain DSM 15465 / Z2491)).